A 415-amino-acid polypeptide reads, in one-letter code: L-cysteine:1D-myo-inositol 2-amino-2-deoxy-alpha-D-glucopyranoside ligase (415 aa).

Cys43 contributes to the Zn(2+) binding site. L-cysteinyl-5'-AMP-binding positions include 43 to 46, Thr58, and 81 to 83; these read CGIT and NVT. Residues 45 to 55 carry the 'HIGH' region motif; it reads ITPYDATHLGH. The 'ERGGDP' region motif lies at 188-193; the sequence is ERGGDP. Trp229 provides a ligand contact to L-cysteinyl-5'-AMP. A Zn(2+)-binding site is contributed by Cys233. 251 to 253 contacts L-cysteinyl-5'-AMP; it reads GSD. His258 is a Zn(2+) binding site. L-cysteinyl-5'-AMP is bound at residue Val285. The 'KMSKS' region motif lies at 291 to 295; sequence KMSKS.

The protein belongs to the class-I aminoacyl-tRNA synthetase family. MshC subfamily. Monomer. Zn(2+) is required as a cofactor.

The enzyme catalyses 1D-myo-inositol 2-amino-2-deoxy-alpha-D-glucopyranoside + L-cysteine + ATP = 1D-myo-inositol 2-(L-cysteinylamino)-2-deoxy-alpha-D-glucopyranoside + AMP + diphosphate + H(+). Its function is as follows. Catalyzes the ATP-dependent condensation of GlcN-Ins and L-cysteine to form L-Cys-GlcN-Ins. This chain is L-cysteine:1D-myo-inositol 2-amino-2-deoxy-alpha-D-glucopyranoside ligase, found in Cellulomonas flavigena (strain ATCC 482 / DSM 20109 / BCRC 11376 / JCM 18109 / NBRC 3775 / NCIMB 8073 / NRS 134).